The chain runs to 262 residues: Tetrahydromethanopterin S-methyltransferase subunit C (262 aa).

The next 7 membrane-spanning stretches (helical) occupy residues 27-47, 72-92, 98-118, 145-165, 173-193, 200-220, and 222-242; these read LVGI…GGLL, PSIG…GVLI, LPVL…GFIV, ALAI…DIII, VIAL…NACI, KRTM…FAIA, and LDIV…GTFV.

This sequence belongs to the MtrC family. As to quaternary structure, the complex is composed of 8 subunits; MtrA, MtrB, MtrC, MtrD, MtrE, MtrF, MtrG and MtrH.

The protein localises to the cell membrane. It catalyses the reaction 5-methyl-5,6,7,8-tetrahydromethanopterin + coenzyme M + 2 Na(+)(in) = 5,6,7,8-tetrahydromethanopterin + methyl-coenzyme M + 2 Na(+)(out). It functions in the pathway one-carbon metabolism; methanogenesis from CO(2); methyl-coenzyme M from 5,10-methylene-5,6,7,8-tetrahydromethanopterin: step 2/2. Part of a complex that catalyzes the formation of methyl-coenzyme M and tetrahydromethanopterin from coenzyme M and methyl-tetrahydromethanopterin. This is an energy-conserving, sodium-ion translocating step. This chain is Tetrahydromethanopterin S-methyltransferase subunit C, found in Methanococcus maripaludis (strain C5 / ATCC BAA-1333).